The following is a 435-amino-acid chain: Ribulose bisphosphate carboxylase large chain (435 aa).

The substrate site is built by Asn104 and Thr154. Lys156 serves as the catalytic Proton acceptor. A substrate-binding site is contributed by Lys158. Lys182, Asp184, and Glu185 together coordinate Mg(2+). Lys182 is subject to N6-carboxylysine. Catalysis depends on His275, which acts as the Proton acceptor. The substrate site is built by Arg276, His308, and Ser360.

Belongs to the RuBisCO large chain family. Type I subfamily. In terms of assembly, heterohexadecamer of 8 large chains and 8 small chains. It depends on Mg(2+) as a cofactor.

It localises to the plastid. It is found in the chloroplast. It catalyses the reaction 2 (2R)-3-phosphoglycerate + 2 H(+) = D-ribulose 1,5-bisphosphate + CO2 + H2O. The catalysed reaction is D-ribulose 1,5-bisphosphate + O2 = 2-phosphoglycolate + (2R)-3-phosphoglycerate + 2 H(+). Its function is as follows. RuBisCO catalyzes two reactions: the carboxylation of D-ribulose 1,5-bisphosphate, the primary event in carbon dioxide fixation, as well as the oxidative fragmentation of the pentose substrate in the photorespiration process. Both reactions occur simultaneously and in competition at the same active site. The sequence is that of Ribulose bisphosphate carboxylase large chain from Euglena pisciformis.